The following is a 365-amino-acid chain: Probable dual-specificity RNA methyltransferase RlmN (365 aa).

Glu108 acts as the Proton acceptor in catalysis. Residues 114-352 (YPDRNTVCIS…SCTVRDTRGR (239 aa)) enclose the Radical SAM core domain. A disulfide bond links Cys121 and Cys358. Positions 128, 132, and 135 each coordinate [4Fe-4S] cluster. S-adenosyl-L-methionine contacts are provided by residues 179 to 180 (GE), Ser213, 236 to 238 (SLH), and Asn315. The active-site S-methylcysteine intermediate is Cys358.

Belongs to the radical SAM superfamily. RlmN family. Requires [4Fe-4S] cluster as cofactor.

It localises to the cytoplasm. The enzyme catalyses adenosine(2503) in 23S rRNA + 2 reduced [2Fe-2S]-[ferredoxin] + 2 S-adenosyl-L-methionine = 2-methyladenosine(2503) in 23S rRNA + 5'-deoxyadenosine + L-methionine + 2 oxidized [2Fe-2S]-[ferredoxin] + S-adenosyl-L-homocysteine. The catalysed reaction is adenosine(37) in tRNA + 2 reduced [2Fe-2S]-[ferredoxin] + 2 S-adenosyl-L-methionine = 2-methyladenosine(37) in tRNA + 5'-deoxyadenosine + L-methionine + 2 oxidized [2Fe-2S]-[ferredoxin] + S-adenosyl-L-homocysteine. Its function is as follows. Specifically methylates position 2 of adenine 2503 in 23S rRNA and position 2 of adenine 37 in tRNAs. The chain is Probable dual-specificity RNA methyltransferase RlmN from Mycolicibacterium gilvum (strain PYR-GCK) (Mycobacterium gilvum (strain PYR-GCK)).